The chain runs to 480 residues: Probable cobyric acid synthase (480 aa).

Positions 246–431 (PVRIAVIRLP…MHGLFLNPSA (186 aa)) constitute a GATase cobBQ-type domain. Cys325 serves as the catalytic Nucleophile. Residue His423 is part of the active site.

It belongs to the CobB/CobQ family. CobQ subfamily.

It participates in cofactor biosynthesis; adenosylcobalamin biosynthesis. Its function is as follows. Catalyzes amidations at positions B, D, E, and G on adenosylcobyrinic A,C-diamide. NH(2) groups are provided by glutamine, and one molecule of ATP is hydrogenolyzed for each amidation. The protein is Probable cobyric acid synthase of Methanoregula boonei (strain DSM 21154 / JCM 14090 / 6A8).